Here is a 226-residue protein sequence, read N- to C-terminus: 7-cyano-7-deazaguanine synthase (226 aa).

Residue 11-21 (LSGGLDSATCL) coordinates ATP. Residues Cys-191, Cys-201, Cys-204, and Cys-207 each coordinate Zn(2+).

It belongs to the QueC family. Requires Zn(2+) as cofactor.

The enzyme catalyses 7-carboxy-7-deazaguanine + NH4(+) + ATP = 7-cyano-7-deazaguanine + ADP + phosphate + H2O + H(+). The protein operates within purine metabolism; 7-cyano-7-deazaguanine biosynthesis. Catalyzes the ATP-dependent conversion of 7-carboxy-7-deazaguanine (CDG) to 7-cyano-7-deazaguanine (preQ(0)). The polypeptide is 7-cyano-7-deazaguanine synthase (Aromatoleum aromaticum (strain DSM 19018 / LMG 30748 / EbN1) (Azoarcus sp. (strain EbN1))).